The primary structure comprises 151 residues: Transcriptional repressor NrdR (151 aa).

A disordered region spans residues 1–21; the sequence is MRCPFCGEADTQVKDSRPTED. A zinc finger spans residues 3–34; that stretch reads CPFCGEADTQVKDSRPTEDGAAIRRRRFCPQC. The span at 11–21 shows a compositional bias: basic and acidic residues; that stretch reads TQVKDSRPTED. The ATP-cone domain occupies 49-139; it reads LVVVKADQRR…VYRDFREAKD (91 aa).

Belongs to the NrdR family. It depends on Zn(2+) as a cofactor.

Its function is as follows. Negatively regulates transcription of bacterial ribonucleotide reductase nrd genes and operons by binding to NrdR-boxes. In Acidiphilium cryptum (strain JF-5), this protein is Transcriptional repressor NrdR.